The following is a 192-amino-acid chain: Photosystem I assembly protein Ycf4 (192 aa).

Helical transmembrane passes span 30–52 and 72–94; these read YFWATAVSIGGLGFFLAGLSSYL and IAIGFYGVAALLLATYLWLAIAW.

It belongs to the Ycf4 family.

The protein resides in the cellular thylakoid membrane. Functionally, seems to be required for the assembly of the photosystem I complex. The sequence is that of Photosystem I assembly protein Ycf4 from Thermosynechococcus vestitus (strain NIES-2133 / IAM M-273 / BP-1).